Reading from the N-terminus, the 255-residue chain is 4-hydroxy-tetrahydrodipicolinate reductase (255 aa).

NAD(+) contacts are provided by residues 8–13, 89–91, and 114–117; these read GASGRM, GTT, and SSNY. H146 acts as the Proton donor/acceptor in catalysis. H147 contributes to the (S)-2,3,4,5-tetrahydrodipicolinate binding site. K150 serves as the catalytic Proton donor. 156-157 provides a ligand contact to (S)-2,3,4,5-tetrahydrodipicolinate; that stretch reads GT.

Belongs to the DapB family.

The protein resides in the cytoplasm. The enzyme catalyses (S)-2,3,4,5-tetrahydrodipicolinate + NAD(+) + H2O = (2S,4S)-4-hydroxy-2,3,4,5-tetrahydrodipicolinate + NADH + H(+). The catalysed reaction is (S)-2,3,4,5-tetrahydrodipicolinate + NADP(+) + H2O = (2S,4S)-4-hydroxy-2,3,4,5-tetrahydrodipicolinate + NADPH + H(+). The protein operates within amino-acid biosynthesis; L-lysine biosynthesis via DAP pathway; (S)-tetrahydrodipicolinate from L-aspartate: step 4/4. Functionally, catalyzes the conversion of 4-hydroxy-tetrahydrodipicolinate (HTPA) to tetrahydrodipicolinate. This is 4-hydroxy-tetrahydrodipicolinate reductase from Methanoregula boonei (strain DSM 21154 / JCM 14090 / 6A8).